Consider the following 724-residue polypeptide: Cyclin-T1 (724 aa).

Serine 117 is subject to Phosphoserine. The Nuclear localization signal signature appears at 253–270; it reads KRIRNWRAYQAAMKTKPD. A Glycyl lysine isopeptide (Lys-Gly) (interchain with G-Cter in SUMO2) cross-link involves residue lysine 342. The stretch at 384-425 forms a coiled coil; it reads SAKVSLKEYRAKHAEELAAQKRQLENMEANVKSQYAYAAQNL. Residue serine 388 is modified to Phosphoserine. Residue lysine 390 is modified to N6-acetyllysine. Lysine 415 participates in a covalent cross-link: Glycyl lysine isopeptide (Lys-Gly) (interchain with G-Cter in SUMO2). Residues serine 416, serine 473, and serine 474 each carry the ADP-ribosylserine modification. The tract at residues 479 to 549 is histidine-rich domain (HRD); it reads IKMRIKVHSA…RPSDPKHSSQ (71 aa). A Glycyl lysine isopeptide (Lys-Gly) (interchain with G-Cter in SUMO2) cross-link involves residue lysine 480. The segment covering 483-507 has biased composition (basic and acidic residues); sequence IKVHSAGDKHNSIEDSVTKSREHKE. 2 disordered regions span residues 483–586 and 691–724; these read IKVH…VFDH and PRAG…PLPK. Residue lysine 484 is modified to N6-(ADP-ribosyl)lysine. Histidine 486 bears the ADP-ribosylhistidine mark. Residues serine 494 and serine 498 each carry the phosphoserine modification. The segment covering 508 to 529 has biased composition (basic residues); it reads KQRTHPSNHHHHHNHHSHRHSH. Residue histidine 529 is modified to ADP-ribosylhistidine. 2 positions are modified to ADP-ribosylserine: serine 548 and serine 551. Histidine 555 is modified (ADP-ribosylhistidine). Residues 559-569 show a composition bias toward low complexity; that stretch reads SLSSTLSSSSS. Serine 562 is modified (ADP-ribosylserine). Residues 708–724 show a composition bias toward pro residues; it reads PPPLPSEPPPPLPPLPK.

It belongs to the cyclin family. Cyclin C subfamily. Cyclin-T1 is the predominant cyclin that associates with CDK9 to form a heterodimer called P-TEFb. P-TEFb forms a complex with AFF4/AF5Q31. Component of a complex which is at least composed of HTATSF1/Tat-SF1, P-TEFb complex, RNA pol II, SUPT5H, and NCL/nucleolin. Component of the 7SK snRNP complex at least composed of P-TEFb (composed of CDK9 and CCNT1/cyclin-T1), HEXIM1, HEXIM2, BCDIN3, SART3 proteins and 7SK and U6 snRNAs. Interacts (via central region) with ZMYND8 (via N-terminus); the interaction is direct and the association appears to occur between homodimeric ZMYND8 and the activated form of the P-TEFb complex. Interacts with BRD4, targets chromatin binding. Interacts with JMJD6. Interacts with MDFIC. Interacts with HSF1. Interacts with HTATSF1. Interacts with TBX21. ADP-ribosylation on serine residues by PARP1 in response to DNA damage disrupts the phase separation activity of CCNT1, thereby preventing activation of CDK9.

It is found in the nucleus. Functionally, regulatory subunit of the cyclin-dependent kinase pair (CDK9/cyclin-T1) complex, also called positive transcription elongation factor B (P-TEFb), which facilitates the transition from abortive to productive elongation by phosphorylating the CTD (C-terminal domain) of the large subunit of RNA polymerase II (RNA Pol II). Required to activate the protein kinase activity of CDK9: acts by mediating formation of liquid-liquid phase separation (LLPS) that enhances binding of P-TEFb to the CTD of RNA Pol II. This chain is Cyclin-T1 (Ccnt1), found in Mus musculus (Mouse).